Consider the following 130-residue polypeptide: Ribonuclease P protein component 2 (130 aa).

This sequence belongs to the eukaryotic/archaeal RNase P protein component 2 family. As to quaternary structure, consists of a catalytic RNA component and at least 5 protein subunits.

The protein localises to the cytoplasm. It carries out the reaction Endonucleolytic cleavage of RNA, removing 5'-extranucleotides from tRNA precursor.. Its function is as follows. Part of ribonuclease P, a protein complex that generates mature tRNA molecules by cleaving their 5'-ends. This is Ribonuclease P protein component 2 from Methanococcus maripaludis (strain DSM 14266 / JCM 13030 / NBRC 101832 / S2 / LL).